We begin with the raw amino-acid sequence, 65 residues long: Photosystem II reaction center protein H (65 aa).

The helical transmembrane segment at 27–47 (GAVPVMAFIGVLLLVFLVIML) threads the bilayer.

Belongs to the PsbH family. PSII is composed of 1 copy each of membrane proteins PsbA, PsbB, PsbC, PsbD, PsbE, PsbF, PsbH, PsbI, PsbJ, PsbK, PsbL, PsbM, PsbT, PsbX, PsbY, Psb30/Ycf12, peripheral proteins PsbO, CyanoQ (PsbQ), PsbU, PsbV and a large number of cofactors. It forms dimeric complexes.

It is found in the cellular thylakoid membrane. Its function is as follows. One of the components of the core complex of photosystem II (PSII), required for its stability and/or assembly. PSII is a light-driven water:plastoquinone oxidoreductase that uses light energy to abstract electrons from H(2)O, generating O(2) and a proton gradient subsequently used for ATP formation. It consists of a core antenna complex that captures photons, and an electron transfer chain that converts photonic excitation into a charge separation. In Prochlorococcus marinus (strain NATL1A), this protein is Photosystem II reaction center protein H.